The chain runs to 103 residues: Small ribosomal subunit protein uS10 (103 aa).

This sequence belongs to the universal ribosomal protein uS10 family. As to quaternary structure, part of the 30S ribosomal subunit.

Involved in the binding of tRNA to the ribosomes. The polypeptide is Small ribosomal subunit protein uS10 (Acetivibrio thermocellus (strain ATCC 27405 / DSM 1237 / JCM 9322 / NBRC 103400 / NCIMB 10682 / NRRL B-4536 / VPI 7372) (Clostridium thermocellum)).